Consider the following 181-residue polypeptide: Large ribosomal subunit protein uL5 (181 aa).

It belongs to the universal ribosomal protein uL5 family. As to quaternary structure, part of the 50S ribosomal subunit; contacts the 5S rRNA and probably tRNA. Forms a bridge to the 30S subunit in the 70S ribosome.

Its function is as follows. This is one of the proteins that bind and probably mediate the attachment of the 5S RNA into the large ribosomal subunit, where it forms part of the central protuberance. In the 70S ribosome it contacts protein S13 of the 30S subunit (bridge B1b), connecting the 2 subunits; this bridge is implicated in subunit movement. May contact the P site tRNA; the 5S rRNA and some of its associated proteins might help stabilize positioning of ribosome-bound tRNAs. The protein is Large ribosomal subunit protein uL5 of Methanococcus maripaludis (strain DSM 14266 / JCM 13030 / NBRC 101832 / S2 / LL).